We begin with the raw amino-acid sequence, 359 residues long: Phospho-N-acetylmuramoyl-pentapeptide-transferase (359 aa).

10 helical membrane-spanning segments follow: residues 23–43 (VAFF…IKWA), 68–88 (MGGI…GNLF), 92–112 (VLLG…DDYM), 126–146 (MKFF…LYIG), 165–185 (AFKI…VFLA), 198–218 (GLAT…VYVA), 235–255 (SGEL…FLWY), 262–282 (VFMG…MAIV), 287–307 (ILLL…ILQV), and 336–356 (KIIV…LLSL).

Belongs to the glycosyltransferase 4 family. MraY subfamily. Mg(2+) serves as cofactor.

It localises to the cell inner membrane. The enzyme catalyses UDP-N-acetyl-alpha-D-muramoyl-L-alanyl-gamma-D-glutamyl-meso-2,6-diaminopimeloyl-D-alanyl-D-alanine + di-trans,octa-cis-undecaprenyl phosphate = di-trans,octa-cis-undecaprenyl diphospho-N-acetyl-alpha-D-muramoyl-L-alanyl-D-glutamyl-meso-2,6-diaminopimeloyl-D-alanyl-D-alanine + UMP. It participates in cell wall biogenesis; peptidoglycan biosynthesis. Functionally, catalyzes the initial step of the lipid cycle reactions in the biosynthesis of the cell wall peptidoglycan: transfers peptidoglycan precursor phospho-MurNAc-pentapeptide from UDP-MurNAc-pentapeptide onto the lipid carrier undecaprenyl phosphate, yielding undecaprenyl-pyrophosphoryl-MurNAc-pentapeptide, known as lipid I. This is Phospho-N-acetylmuramoyl-pentapeptide-transferase from Helicobacter hepaticus (strain ATCC 51449 / 3B1).